Here is a 1249-residue protein sequence, read N- to C-terminus: Protein lingerer (1249 aa).

A disordered region spans residues 1–66 (MSTQTRSGGG…VVKAKQPTAE (66 aa)). Composition is skewed to gly residues over residues 7-30 (SGGG…GAAG) and 38-50 (GSTG…GAGG). Positions 84–124 (KIQEKIQSLMETTQRSEEEVCCALQECDSDLDRAVIFLLET) constitute a UBA domain. 10 disordered regions span residues 132–312 (TTSK…LKPE), 350–375 (SAGA…ASNV), 454–506 (MPPM…PPTT), 549–579 (YAAA…AVEM), 616–717 (TTGT…TSVS), 738–922 (PYGQ…SLPI), 1016–1042 (GRFT…TGSG), 1124–1149 (QQQS…APSM), 1164–1186 (KQSF…AGTT), and 1211–1249 (QNMH…TGPN). The segment covering 186-209 (NRGGSGNQRSGGPGRGGRAGGYRD) has biased composition (gly residues). Positions 210 to 227 (GGGDRDRDRDRNGYDKGG) are enriched in basic and acidic residues. 2 stretches are compositionally biased toward gly residues: residues 228-240 (EGGG…GGDG) and 248-269 (DGPG…GGPR). Over residues 350–369 (SAGAGAQQQQSQQSTQTGVP) the composition is skewed to low complexity. Residues 457 to 494 (MNTSSSLSAEQSQYFSTLSSQNSNLQPTPSAVGFQQQP) are compositionally biased toward polar residues. Low complexity-rich tracts occupy residues 549 to 559 (YAAAATQQPPV), 616 to 639 (TTGT…PATV), and 647 to 664 (QSQL…APQQ). Positions 678-705 (ASSQIMPGQGTTEALSSQNDGLANSYSR) are enriched in polar residues. A compositionally biased stretch (low complexity) spans 706 to 717 (TNASGSVSTSVS). Composition is skewed to polar residues over residues 738 to 769 (PYGQ…TASY) and 777 to 809 (GYNN…NVNA). Residues 811–861 (QPPSSSVTNNVVPNNNTGNSVGGVSNQSNLPVNNNAVNSSSNNNAGGYLSS) are compositionally biased toward low complexity. Polar residues predominate over residues 862 to 873 (QYPVSQTSSAFP). Composition is skewed to low complexity over residues 874–884 (SQQNYQNSSQN), 892–922 (NSNT…SLPI), and 1023–1034 (NNSSPVSNVPSS). Over residues 1124 to 1138 (QQQSKGQTVANQQSG) the composition is skewed to polar residues. Over residues 1216 to 1249 (DSNSSGQRPQNNNQGKTASKQQGYSASTYWTGPN) the composition is skewed to polar residues.

The protein localises to the cytoplasm. Acts in the nervous system to mediate the control of copulatory organs during courtship. The protein is Protein lingerer of Anopheles gambiae (African malaria mosquito).